Consider the following 442-residue polypeptide: tRNA(Ile)-lysidine synthase (442 aa).

ATP is bound at residue 28-33; that stretch reads SGGLDS.

It belongs to the tRNA(Ile)-lysidine synthase family.

Its subcellular location is the cytoplasm. The catalysed reaction is cytidine(34) in tRNA(Ile2) + L-lysine + ATP = lysidine(34) in tRNA(Ile2) + AMP + diphosphate + H(+). Functionally, ligates lysine onto the cytidine present at position 34 of the AUA codon-specific tRNA(Ile) that contains the anticodon CAU, in an ATP-dependent manner. Cytidine is converted to lysidine, thus changing the amino acid specificity of the tRNA from methionine to isoleucine. The polypeptide is tRNA(Ile)-lysidine synthase (Pseudomonas aeruginosa (strain ATCC 15692 / DSM 22644 / CIP 104116 / JCM 14847 / LMG 12228 / 1C / PRS 101 / PAO1)).